Here is a 333-residue protein sequence, read N- to C-terminus: Methylosome protein WDR77 (333 aa).

7 WD repeats span residues 16 to 59 (CMEV…GAPN), 68 to 106 (QTEA…SLLV), 113 to 152 (EHDD…VLKS), 155 to 195 (AHSS…PATR), 199 to 240 (CASD…SAQT), 243 to 283 (VHSQ…VFRD), and 285 to 328 (SHRD…NLIA).

As to quaternary structure, heterotetramer; dimer of heterodimer with prmt5. Interacts with histone h2a and h4 and with nucleoplasmin. As to expression, detected in egg (at protein level).

It is found in the cytoplasm. The protein localises to the nucleus. Functionally, non-catalytic component of the 20S prmt5-containing methyltransferase complex, which modifies specific arginines to dimethylarginines in several spliceosomal Sm proteins and histones. Required for normal prmt5 methyltransferase activity. The polypeptide is Methylosome protein WDR77 (Xenopus laevis (African clawed frog)).